The sequence spans 219 residues: MNQAIDFAQASIDSYKKHGILEDVIHDTSFQPSGILAVEYSSSAPVAMGNTLPTEKARSKPQFQFTFNKQMQKSVPQANAYVPQDDDLFTLVMTDPDAPSKTDHKWSEFCHLVECDLKLLNEATHETSGATEFFASEFNTKGSNTLIEYMGPAPPKGSGPHRYVFLLYKQPKGVDSSKFSKIKDRPNWGYGTPATGVGKWAKENNLQLVASNFFYAETK.

M1 is modified (N-acetylmethionine).

Belongs to the phosphatidylethanolamine-binding protein family. Monomer.

Its subcellular location is the cytoplasm. Functionally, specific and potent inhibitor of carboxypeptidase Y. The chain is Carboxypeptidase Y inhibitor (TFS1) from Saccharomyces cerevisiae (strain ATCC 204508 / S288c) (Baker's yeast).